A 491-amino-acid chain; its full sequence is Histamine H1 receptor (491 aa).

At 1–30 (MTCPNSSCVFEDKMCQGNKTAPANDAQLTP) the chain is on the extracellular side. Asparagine 5 and asparagine 18 each carry an N-linked (GlcNAc...) asparagine glycan. Residues 31-51 (LVVVLSTISLVTVGLNLLVLY) traverse the membrane as a helical segment. At 52-65 (AVRSERKLHTVGNL) the chain is on the cytoplasmic side. A helical transmembrane segment spans residues 66–90 (YIVSLSVADLIVGVVVMPMNILYLL). Over 91 to 98 (MSRWSLGR) the chain is Extracellular. A helical membrane pass occupies residues 99–124 (PLCLFWLSMDYVASTASIFSVFILCI). Cysteine 101 and cysteine 181 are joined by a disulfide. Positions 108 and 113 each coordinate histamine. Positions 108-113 (DYVAST) are important for agonist binding. The Cytoplasmic segment spans residues 125 to 145 (DRYRSVQQPLKYLRYRTKTRA). Residues threonine 141 and threonine 143 each carry the phosphothreonine modification. A helical membrane pass occupies residues 146 to 165 (SITILAAWFLSFLWIIPILG). Residues 166–189 (WRHFQPKTPEPREDKCETDFYNVT) lie on the Extracellular side of the membrane. Residues 190–212 (WFKVMTAIINFYLPTLLMLWFYA) form a helical membrane-spanning segment. Asparagine 199 is a histamine binding site. Topologically, residues 213-420 (KIYKAVRQHC…MNRERKAAKQ (208 aa)) are cytoplasmic. Serine 231 carries the post-translational modification Phosphoserine. 2 disordered regions span residues 246 to 297 (QVGA…KEEK) and 360 to 385 (QSFSRTDSDTPAEPAPAKGKSRSESS). Over residues 252–262 (PGKESPWEVLK) the composition is skewed to basic and acidic residues. A phosphoserine mark is found at serine 384, serine 400, and serine 402. The chain crosses the membrane as a helical span at residues 421 to 444 (LGFIMAAFIICWIPYFIFFMVIAF). An important for agonist binding region spans residues 428 to 432 (FIICW). Tyrosine 435 serves as a coordination point for histamine. A disulfide bridge links cysteine 445 with cysteine 448. Over 445 to 450 (CESCCN) the chain is Extracellular. Residues 451–473 (QHVHMFTIWLGYINSTLNPLIYP) traverse the membrane as a helical segment. Residues 474–491 (LCNENFKKTFKKILHIRS) lie on the Cytoplasmic side of the membrane.

Belongs to the G-protein coupled receptor 1 family. Phosphorylation at sites in the second and third cytoplasmic loops independently contribute to agonist-induced receptor down-regulation. As to expression, brain, lung, small intestine, uterus, adrenal medulla and spleen.

It localises to the cell membrane. Functionally, G-protein-coupled receptor for histamine, a biogenic amine that functions as an immune modulator and a neurotransmitter. Through the H1 receptor, histamine mediates the contraction of smooth muscles and increases capillary permeability due to contraction of terminal venules. Also mediates neurotransmission in the central nervous system and thereby regulates circadian rhythms, emotional and locomotor activities as well as cognitive functions. This Bos taurus (Bovine) protein is Histamine H1 receptor.